Reading from the N-terminus, the 361-residue chain is Histidinol-phosphate aminotransferase (361 aa).

The residue at position 221 (lysine 221) is an N6-(pyridoxal phosphate)lysine.

Belongs to the class-II pyridoxal-phosphate-dependent aminotransferase family. Histidinol-phosphate aminotransferase subfamily. Pyridoxal 5'-phosphate serves as cofactor.

The catalysed reaction is L-histidinol phosphate + 2-oxoglutarate = 3-(imidazol-4-yl)-2-oxopropyl phosphate + L-glutamate. It participates in amino-acid biosynthesis; L-histidine biosynthesis; L-histidine from 5-phospho-alpha-D-ribose 1-diphosphate: step 7/9. This is Histidinol-phosphate aminotransferase from Methanocella arvoryzae (strain DSM 22066 / NBRC 105507 / MRE50).